The chain runs to 198 residues: Transcription factor LBX2 (198 aa).

Disordered stretches follow at residues Met24–Cys46, Ala63–Arg89, and Asp173–Asp198. Residues Arg85–Val144 constitute a DNA-binding region (homeobox).

The protein resides in the nucleus. In terms of biological role, transcription factor. In Homo sapiens (Human), this protein is Transcription factor LBX2 (LBX2).